Here is a 193-residue protein sequence, read N- to C-terminus: Ribonuclease HII (193 aa).

The RNase H type-2 domain occupies 15 to 193; the sequence is YIVAGIDEAG…PYHRRSFKCC (179 aa). 3 residues coordinate a divalent metal cation: D21, E22, and D112.

It belongs to the RNase HII family. The cofactor is Mn(2+). It depends on Mg(2+) as a cofactor.

It is found in the cytoplasm. It catalyses the reaction Endonucleolytic cleavage to 5'-phosphomonoester.. Its function is as follows. Endonuclease that specifically degrades the RNA of RNA-DNA hybrids. This chain is Ribonuclease HII, found in Rickettsia felis (strain ATCC VR-1525 / URRWXCal2) (Rickettsia azadi).